A 258-amino-acid polypeptide reads, in one-letter code: Protein UL24 homolog (258 aa).

Belongs to the herpesviridae UL24 family.

The protein resides in the virion. Its subcellular location is the host cytoplasm. The protein localises to the host nucleus. It is found in the host nucleolus. It localises to the host Golgi apparatus. Functionally, may participate in nuclear egress of viral particles. Plays a role in the dispersal of several host nucleolar proteins including NCL/nucleolin and NPM1. Since deletion of host NCL/nucleolin negatively impact on nuclear egress, UL24 supposedly acts on this process through its effect on host nucleoli. The sequence is that of Protein UL24 homolog from Varicella-zoster virus (strain Dumas) (HHV-3).